The chain runs to 638 residues: Threonine--tRNA ligase (638 aa).

Residues 1–61 (MPLITLPDGN…DKDCSVKIFT (61 aa)) form the TGS domain. Residues 243-535 (DHRKLGKEMD…LIENYAGKFP (293 aa)) form a catalytic region. Zn(2+) is bound by residues cysteine 335, histidine 386, and histidine 512.

The protein belongs to the class-II aminoacyl-tRNA synthetase family. In terms of assembly, homodimer. Zn(2+) serves as cofactor.

It localises to the cytoplasm. It catalyses the reaction tRNA(Thr) + L-threonine + ATP = L-threonyl-tRNA(Thr) + AMP + diphosphate + H(+). Its function is as follows. Catalyzes the attachment of threonine to tRNA(Thr) in a two-step reaction: L-threonine is first activated by ATP to form Thr-AMP and then transferred to the acceptor end of tRNA(Thr). Also edits incorrectly charged L-seryl-tRNA(Thr). In Pelagibacter ubique (strain HTCC1062), this protein is Threonine--tRNA ligase.